The primary structure comprises 1212 residues: Dermatan-sulfate epimerase-like protein (1212 aa).

An N-terminal signal peptide occupies residues 1-20 (MALMFTGHLLFLALLMFAFS). Residues Asn-28, Asn-666, Asn-688, and Asn-709 are each glycosylated (N-linked (GlcNAc...) asparagine). 2 consecutive transmembrane segments (helical) span residues 764 to 784 (IIFP…CISL) and 803 to 823 (WILI…WSTC). Asn-874 is a glycosylation site (N-linked (GlcNAc...) asparagine).

This sequence belongs to the dermatan-sulfate isomerase family. Expressed in different brain areas as well as in multiple other peripheral tissues.

The protein localises to the membrane. The chain is Dermatan-sulfate epimerase-like protein (DSEL) from Homo sapiens (Human).